The primary structure comprises 229 residues: UPF0173 metal-dependent hydrolase RD1_1994 (229 aa).

It belongs to the UPF0173 family.

The chain is UPF0173 metal-dependent hydrolase RD1_1994 from Roseobacter denitrificans (strain ATCC 33942 / OCh 114) (Erythrobacter sp. (strain OCh 114)).